A 190-amino-acid polypeptide reads, in one-letter code: Holliday junction branch migration complex subunit RuvA (190 aa).

The segment at methionine 1–glycine 64 is domain I. The interval serine 65 to glycine 137 is domain II. Positions glycine 137–histidine 141 are flexible linker. Residues alanine 142–arginine 190 are domain III.

It belongs to the RuvA family. In terms of assembly, homotetramer. Forms an RuvA(8)-RuvB(12)-Holliday junction (HJ) complex. HJ DNA is sandwiched between 2 RuvA tetramers; dsDNA enters through RuvA and exits via RuvB. An RuvB hexamer assembles on each DNA strand where it exits the tetramer. Each RuvB hexamer is contacted by two RuvA subunits (via domain III) on 2 adjacent RuvB subunits; this complex drives branch migration. In the full resolvosome a probable DNA-RuvA(4)-RuvB(12)-RuvC(2) complex forms which resolves the HJ.

It is found in the cytoplasm. Functionally, the RuvA-RuvB-RuvC complex processes Holliday junction (HJ) DNA during genetic recombination and DNA repair, while the RuvA-RuvB complex plays an important role in the rescue of blocked DNA replication forks via replication fork reversal (RFR). RuvA specifically binds to HJ cruciform DNA, conferring on it an open structure. The RuvB hexamer acts as an ATP-dependent pump, pulling dsDNA into and through the RuvAB complex. HJ branch migration allows RuvC to scan DNA until it finds its consensus sequence, where it cleaves and resolves the cruciform DNA. This is Holliday junction branch migration complex subunit RuvA from Bordetella pertussis (strain Tohama I / ATCC BAA-589 / NCTC 13251).